The sequence spans 311 residues: Catechol 1,2-dioxygenase 1 (311 aa).

The Fe cation site is built by Y164, Y200, H224, and H226.

Belongs to the intradiol ring-cleavage dioxygenase family. As to quaternary structure, homodimer. Fe(3+) is required as a cofactor.

The catalysed reaction is catechol + O2 = cis,cis-muconate + 2 H(+). It participates in aromatic compound metabolism; beta-ketoadipate pathway; 5-oxo-4,5-dihydro-2-furylacetate from catechol: step 1/3. Can cleave 4-methyl-, 4-chloro-, and 3-methoxycatechol at lower rates than catechol, but has no activity with 4-nitrocatechol or protocatechuic acid. In Acinetobacter lwoffii, this protein is Catechol 1,2-dioxygenase 1 (catA1).